The sequence spans 365 residues: Probable 7-methylxanthine methyltransferase 4 (365 aa).

Y18 provides a ligand contact to S-adenosyl-L-homocysteine. T25 lines the theobromine pocket. Residues C62, Q67, D99, L100, S132, and F133 each coordinate S-adenosyl-L-homocysteine. Theobromine contacts are provided by Y150, H153, and W154. The Mg(2+) site is built by N170, D256, F258, and N259. F311 serves as a coordination point for theobromine.

It belongs to the methyltransferase superfamily. Type-7 methyltransferase family. Mg(2+) is required as a cofactor.

It catalyses the reaction 7-methylxanthine + S-adenosyl-L-methionine = theobromine + S-adenosyl-L-homocysteine + H(+). It participates in alkaloid biosynthesis. Its function is as follows. Involved in the biosynthesis of theobromine. The chain is Probable 7-methylxanthine methyltransferase 4 from Theobroma cacao (Cacao).